We begin with the raw amino-acid sequence, 360 residues long: Phosphate acyltransferase (360 aa).

The protein belongs to the PlsX family. Homodimer. Probably interacts with PlsY.

It is found in the cytoplasm. The catalysed reaction is a fatty acyl-[ACP] + phosphate = an acyl phosphate + holo-[ACP]. Its pathway is lipid metabolism; phospholipid metabolism. Its function is as follows. Catalyzes the reversible formation of acyl-phosphate (acyl-PO(4)) from acyl-[acyl-carrier-protein] (acyl-ACP). This enzyme utilizes acyl-ACP as fatty acyl donor, but not acyl-CoA. The chain is Phosphate acyltransferase from Thermobifida fusca (strain YX).